We begin with the raw amino-acid sequence, 304 residues long: tRNA dimethylallyltransferase (304 aa).

9 to 16 (APTAAGKS) is a binding site for ATP. Residue 11-16 (TAAGKS) participates in substrate binding.

It belongs to the IPP transferase family. In terms of assembly, monomer. The cofactor is Mg(2+).

The enzyme catalyses adenosine(37) in tRNA + dimethylallyl diphosphate = N(6)-dimethylallyladenosine(37) in tRNA + diphosphate. Its function is as follows. Catalyzes the transfer of a dimethylallyl group onto the adenine at position 37 in tRNAs that read codons beginning with uridine, leading to the formation of N6-(dimethylallyl)adenosine (i(6)A). The protein is tRNA dimethylallyltransferase of Deinococcus geothermalis (strain DSM 11300 / CIP 105573 / AG-3a).